A 616-amino-acid polypeptide reads, in one-letter code: Dihydroxy-acid dehydratase (616 aa).

Position 81 (Asp-81) interacts with Mg(2+). A [2Fe-2S] cluster-binding site is contributed by Cys-122. Mg(2+) is bound by residues Asp-123 and Lys-124. N6-carboxylysine is present on Lys-124. Cys-195 provides a ligand contact to [2Fe-2S] cluster. Glu-491 is a Mg(2+) binding site. The Proton acceptor role is filled by Ser-517.

This sequence belongs to the IlvD/Edd family. In terms of assembly, homodimer. It depends on [2Fe-2S] cluster as a cofactor. Mg(2+) serves as cofactor.

It catalyses the reaction (2R)-2,3-dihydroxy-3-methylbutanoate = 3-methyl-2-oxobutanoate + H2O. The enzyme catalyses (2R,3R)-2,3-dihydroxy-3-methylpentanoate = (S)-3-methyl-2-oxopentanoate + H2O. Its pathway is amino-acid biosynthesis; L-isoleucine biosynthesis; L-isoleucine from 2-oxobutanoate: step 3/4. The protein operates within amino-acid biosynthesis; L-valine biosynthesis; L-valine from pyruvate: step 3/4. Functionally, functions in the biosynthesis of branched-chain amino acids. Catalyzes the dehydration of (2R,3R)-2,3-dihydroxy-3-methylpentanoate (2,3-dihydroxy-3-methylvalerate) into 2-oxo-3-methylpentanoate (2-oxo-3-methylvalerate) and of (2R)-2,3-dihydroxy-3-methylbutanoate (2,3-dihydroxyisovalerate) into 2-oxo-3-methylbutanoate (2-oxoisovalerate), the penultimate precursor to L-isoleucine and L-valine, respectively. This is Dihydroxy-acid dehydratase from Shewanella sediminis (strain HAW-EB3).